The chain runs to 258 residues: Large ribosomal subunit protein bL21 (258 aa).

Residues 140–159 (KAKDAKDEAPKAAPKAEKKK) show a composition bias toward basic and acidic residues. A disordered region spans residues 140–181 (KAKDAKDEAPKAAPKAEKKKAAPKKAKAEAAPAAADEGTRPA).

Belongs to the bacterial ribosomal protein bL21 family. In terms of assembly, part of the 50S ribosomal subunit. Contacts protein L20.

This protein binds to 23S rRNA in the presence of protein L20. The polypeptide is Large ribosomal subunit protein bL21 (Jannaschia sp. (strain CCS1)).